A 391-amino-acid chain; its full sequence is MYDVVDLTPTYSPTLKPMLSQQYQTVPPFIIPPNDPNSPSPLSSPSLLSLHQIQMHHQQQLQLLQQQQQQLQQQHQNQVVNQPIQPLQPQPSAFLLNHPNTITTPPLQPMMTPNTIISINSLPPTTTTTTTTTTTTTIPNNNNNITLSPQHHHGQQQHHQHPHLRVDISNNNNSVVDQLPQQQQTNVNNNNNNNNNNNNNNNSNNNNNNNNDFSTPNSFSVPTTPMVAPQMQFPQPPPPLSALNTPNNSTSNPTTPRNERDLLRRLAVANSNNNLNNNLNNLNNNNNNNNNNNNNNNNNNNNNSNNNNINNNNNINNNNNLNNNNLNNNNLPIIQPLNLNNNNNNNNNNNNNNNNNLINPFLNEAIDEQVVPKGSTSPLITSSKKRIKLNV.

A compositionally biased stretch (low complexity) spans 118–149 (SINSLPPTTTTTTTTTTTTTIPNNNNNITLSP). 4 disordered regions span residues 118–162 (SINS…HQHP), 184–258 (QTNV…TPRN), 272–327 (NNNL…NNLN), and 337–356 (LNLN…NNNN). Positions 150–162 (QHHHGQQQHHQHP) are enriched in basic residues. The span at 186–211 (NVNNNNNNNNNNNNNNNSNNNNNNNN) shows a compositional bias: low complexity. A compositionally biased stretch (polar residues) spans 212-223 (DFSTPNSFSVPT). The span at 244–256 (NTPNNSTSNPTTP) shows a compositional bias: low complexity.

This is an uncharacterized protein from Dictyostelium discoideum (Social amoeba).